The following is a 196-amino-acid chain: Lipoprotein signal peptidase (196 aa).

The next 3 membrane-spanning stretches (helical) occupy residues 43–63 (LMLKVTSILNMVYTWNYGISF), 75–95 (AIFLITNMIIVCYLYHLMICS), and 97–117 (TIGSFVGYNFVIGGAIGNLID). Catalysis depends on residues Asp-126 and Asp-144. A helical transmembrane segment spans residues 135–155 (YSFPVFNLADCFITLGVIILI).

Belongs to the peptidase A8 family.

It localises to the cell inner membrane. The catalysed reaction is Release of signal peptides from bacterial membrane prolipoproteins. Hydrolyzes -Xaa-Yaa-Zaa-|-(S,diacylglyceryl)Cys-, in which Xaa is hydrophobic (preferably Leu), and Yaa (Ala or Ser) and Zaa (Gly or Ala) have small, neutral side chains.. Its pathway is protein modification; lipoprotein biosynthesis (signal peptide cleavage). This protein specifically catalyzes the removal of signal peptides from prolipoproteins. The protein is Lipoprotein signal peptidase of Rickettsia typhi (strain ATCC VR-144 / Wilmington).